Consider the following 297-residue polypeptide: Ribosomal RNA small subunit methyltransferase H (297 aa).

Residues 30–32 (GGY), D48, F75, D96, and Q103 each bind S-adenosyl-L-methionine.

Belongs to the methyltransferase superfamily. RsmH family.

It localises to the cytoplasm. The enzyme catalyses cytidine(1402) in 16S rRNA + S-adenosyl-L-methionine = N(4)-methylcytidine(1402) in 16S rRNA + S-adenosyl-L-homocysteine + H(+). In terms of biological role, specifically methylates the N4 position of cytidine in position 1402 (C1402) of 16S rRNA. This is Ribosomal RNA small subunit methyltransferase H from Ehrlichia canis (strain Jake).